We begin with the raw amino-acid sequence, 238 residues long: tRNA1(Val) (adenine(37)-N6)-methyltransferase (238 aa).

The protein belongs to the methyltransferase superfamily. tRNA (adenine-N(6)-)-methyltransferase family.

Its subcellular location is the cytoplasm. The enzyme catalyses adenosine(37) in tRNA1(Val) + S-adenosyl-L-methionine = N(6)-methyladenosine(37) in tRNA1(Val) + S-adenosyl-L-homocysteine + H(+). Its function is as follows. Specifically methylates the adenine in position 37 of tRNA(1)(Val) (anticodon cmo5UAC). In Shewanella baltica (strain OS195), this protein is tRNA1(Val) (adenine(37)-N6)-methyltransferase.